A 200-amino-acid polypeptide reads, in one-letter code: MHLNENTKILGHRVILVPYEARHVPKYHEWMSNETLRELTASEELTLEEEHEMQRSWREDSDKLTFIVLDAETYSRDQDEIAAMVGDTNLFLHQDPDSQIPTAEAEIMIAEPYARGKGFGREAMLLMLKYAQSQPQLKLDKFEVKIDMDNAASLHLFKSFMFVETRRVEIFHEVTLERPITPDWINWLDQQVDLRMQCYQ.

The N-acetyltransferase domain maps to 34 to 181 (ETLRELTASE…HEVTLERPIT (148 aa)).

This sequence belongs to the acetyltransferase family. GNAT subfamily. As to quaternary structure, interacts with microtubules as well as alpha/beta-tubulin heterodimers.

Its subcellular location is the nucleus. The protein resides in the cytoplasm. It localises to the cytoskeleton. The protein localises to the spindle. It is found in the spindle pole. The enzyme catalyses N-terminal L-methionyl-[tubulin] + acetyl-CoA = N-terminal N(alpha)-acetyl-L-methionyl-[tubulin] + CoA + H(+). Functionally, N-acetyltransferase that mediates the acetylation of the N-terminal residues of alpha- and beta-tubulin. Required for microtubule stability and inhibition of JNK signaling to promote cell survival during development, possibly acting independently of its N-acetyltransferase activity. Necessary for the stabilization of spindle microtubules and for mitosis progression. Regulates microtubule stability by inhibiting Spastin-mediated depolymerization and promoting Eb1-mediated polymerization. This is Alpha/beta-tubulin-N-acetyltransferase 9 from Drosophila melanogaster (Fruit fly).